The primary structure comprises 209 residues: Uracil phosphoribosyltransferase (209 aa).

5-phospho-alpha-D-ribose 1-diphosphate contacts are provided by residues R79, R104, and D131–S139. Residues I194 and G199–A201 each bind uracil. D200 contributes to the 5-phospho-alpha-D-ribose 1-diphosphate binding site.

The protein belongs to the UPRTase family. Mg(2+) is required as a cofactor.

It catalyses the reaction UMP + diphosphate = 5-phospho-alpha-D-ribose 1-diphosphate + uracil. It participates in pyrimidine metabolism; UMP biosynthesis via salvage pathway; UMP from uracil: step 1/1. With respect to regulation, allosterically activated by GTP. Functionally, catalyzes the conversion of uracil and 5-phospho-alpha-D-ribose 1-diphosphate (PRPP) to UMP and diphosphate. The protein is Uracil phosphoribosyltransferase of Staphylococcus saprophyticus subsp. saprophyticus (strain ATCC 15305 / DSM 20229 / NCIMB 8711 / NCTC 7292 / S-41).